The sequence spans 245 residues: Eukaryotic translation initiation factor 6 (245 aa).

2 positions are modified to phosphoserine; by CK1: serine 174 and serine 175. The residue at position 231 (serine 231) is a Phosphoserine.

The protein belongs to the eIF-6 family. As to quaternary structure, monomer. Associates with the 60S ribosomal subunit. Post-translationally, phosphorylation at Ser-174 and Ser-175 promotes nuclear export.

The protein localises to the cytoplasm. It localises to the nucleus. Its subcellular location is the nucleolus. Binds to the 60S ribosomal subunit and prevents its association with the 40S ribosomal subunit to form the 80S initiation complex in the cytoplasm. Is also involved in ribosome biogenesis. Associates with pre-60S subunits in the nucleus and is involved in its nuclear export. Cytoplasmic release of TIF6 from 60S subunits and nuclear relocalization is promoted by the GTPase RIA1/EFL1 and by SDO1. Also required for pre-rRNA processing. This Saccharomyces cerevisiae (strain ATCC 204508 / S288c) (Baker's yeast) protein is Eukaryotic translation initiation factor 6.